A 605-amino-acid chain; its full sequence is Membrane protein insertase YidC (605 aa).

A helical membrane pass occupies residues 8 to 28 (MIIAIALSLAVLLGWNYFVAA). Low complexity predominate over residues 35-47 (RQQQAQTSASPSP). A disordered region spans residues 35-71 (RQQQAQTSASPSPKEGGPSAPVPGTLPGASGGNPQAA). 4 helical membrane passes run 377-397 (LFGN…LFFL), 451-471 (WPVV…FVTI), 496-516 (LFGL…WPIV), and 540-560 (FTFM…GLVI).

The protein belongs to the OXA1/ALB3/YidC family. Type 1 subfamily. Interacts with the Sec translocase complex via SecD. Specifically interacts with transmembrane segments of nascent integral membrane proteins during membrane integration.

It localises to the cell inner membrane. In terms of biological role, required for the insertion and/or proper folding and/or complex formation of integral membrane proteins into the membrane. Involved in integration of membrane proteins that insert both dependently and independently of the Sec translocase complex, as well as at least some lipoproteins. Aids folding of multispanning membrane proteins. This is Membrane protein insertase YidC from Methylobacterium nodulans (strain LMG 21967 / CNCM I-2342 / ORS 2060).